The chain runs to 280 residues: Cell division control protein 2 homolog B (280 aa).

ATP is bound by residues 1-5 (AYGVV) and lysine 20. The region spanning 1-274 (AYGVVYKARD…AKKALEHEYF (274 aa)) is the Protein kinase domain. Residue tyrosine 2 is modified to Phosphotyrosine. Aspartate 114 functions as the Proton acceptor in the catalytic mechanism. Position 148 is a phosphothreonine; by CAK (threonine 148).

The protein belongs to the protein kinase superfamily. CMGC Ser/Thr protein kinase family. CDC2/CDKX subfamily.

It catalyses the reaction L-seryl-[protein] + ATP = O-phospho-L-seryl-[protein] + ADP + H(+). The enzyme catalyses L-threonyl-[protein] + ATP = O-phospho-L-threonyl-[protein] + ADP + H(+). The catalysed reaction is [DNA-directed RNA polymerase] + ATP = phospho-[DNA-directed RNA polymerase] + ADP + H(+). With respect to regulation, phosphorylation at Tyr-2 inactivates the enzyme, while phosphorylation at Thr-148 activates it. In terms of biological role, plays a key role in the control of the eukaryotic cell cycle. The protein is Cell division control protein 2 homolog B (CDC2B) of Antirrhinum majus (Garden snapdragon).